A 463-amino-acid chain; its full sequence is Exodeoxyribonuclease 7 large subunit (463 aa).

The protein belongs to the XseA family. As to quaternary structure, heterooligomer composed of large and small subunits.

The protein resides in the cytoplasm. The enzyme catalyses Exonucleolytic cleavage in either 5'- to 3'- or 3'- to 5'-direction to yield nucleoside 5'-phosphates.. Bidirectionally degrades single-stranded DNA into large acid-insoluble oligonucleotides, which are then degraded further into small acid-soluble oligonucleotides. The sequence is that of Exodeoxyribonuclease 7 large subunit from Bordetella pertussis (strain Tohama I / ATCC BAA-589 / NCTC 13251).